The chain runs to 702 residues: A-type inclusion protein A25 homolog (702 aa).

Positions 342–380 (TNTGIEEPHATGGDKEDQPIKVVHPPNNDKDDAIKSYNP) are disordered. Residues 347–360 (EEPHATGGDKEDQP) show a composition bias toward basic and acidic residues. Coiled-coil stretches lie at residues 420–522 (NGGE…RDGK) and 548–692 (EIDK…NNKT).

The protein belongs to the poxviridae A25 protein family. As to quaternary structure, interacts (via N-terminus) with protein A26.

Its subcellular location is the virion. Its function is as follows. Structural protein that forms a matrix surrounding the mature virion (MV) through interaction with protein A26. Presence of protein A25 in the virion structurally prevents direct virus-cell fusion mechanism. This Variola virus (isolate Human/India/Ind3/1967) (VARV) protein is A-type inclusion protein A25 homolog.